We begin with the raw amino-acid sequence, 174 residues long: 3-hydroxydecanoyl-[acyl-carrier-protein] dehydratase (174 aa).

His73 is a catalytic residue.

This sequence belongs to the thioester dehydratase family. FabA subfamily. In terms of assembly, homodimer.

It localises to the cytoplasm. The catalysed reaction is a (3R)-hydroxyacyl-[ACP] = a (2E)-enoyl-[ACP] + H2O. It carries out the reaction (3R)-hydroxydecanoyl-[ACP] = (2E)-decenoyl-[ACP] + H2O. The enzyme catalyses (2E)-decenoyl-[ACP] = (3Z)-decenoyl-[ACP]. It participates in lipid metabolism; fatty acid biosynthesis. Functionally, necessary for the introduction of cis unsaturation into fatty acids. Catalyzes the dehydration of (3R)-3-hydroxydecanoyl-ACP to E-(2)-decenoyl-ACP and then its isomerization to Z-(3)-decenoyl-ACP. Can catalyze the dehydratase reaction for beta-hydroxyacyl-ACPs with saturated chain lengths up to 16:0, being most active on intermediate chain length. The protein is 3-hydroxydecanoyl-[acyl-carrier-protein] dehydratase of Teredinibacter turnerae (strain ATCC 39867 / T7901).